A 114-amino-acid chain; its full sequence is Pancreatic progenitor cell differentiation and proliferation factor (114 aa).

Residue Ser-9 is modified to Phosphoserine. 2 disordered regions span residues 22-47 (GSTSSNSSCSSTECPGEAIPHPPGLP) and 75-114 (AEHSEPPQASSSMTACGLARDAPRKQPGGQSSTASAGPPS). Positions 23–33 (STSSNSSCSST) are enriched in low complexity. Polar residues predominate over residues 102-114 (GGQSSTASAGPPS).

The protein belongs to the PPDPF family.

Its function is as follows. Probable regulator of exocrine pancreas development. The polypeptide is Pancreatic progenitor cell differentiation and proliferation factor (PPDPF) (Homo sapiens (Human)).